The following is a 148-amino-acid chain: MELILLEKVANLGNLGDKVKVKAGYGRNFLLPFGKATVANAANLAAFEERRAELEKAAADKKASAESRAAQLAELEVTITATAGDEGKLFGSIGTHDIADALTASGVEVAKAEVRLPNGTIRQVGEYDVAVHLHSDVEATVRVVVVAA.

The protein belongs to the bacterial ribosomal protein bL9 family.

Functionally, binds to the 23S rRNA. This chain is Large ribosomal subunit protein bL9, found in Pseudomonas putida (strain ATCC 700007 / DSM 6899 / JCM 31910 / BCRC 17059 / LMG 24140 / F1).